The primary structure comprises 333 residues: Electron transfer flavoprotein subunit alpha, mitochondrial (333 aa).

The N-terminal 19 residues, 1–19, are a transit peptide targeting the mitochondrion; the sequence is MFRAAAPGQLRRATSLLRF. Residues 20–204 form a domain I region; that stretch reads QSTLVIAEHA…GISEWLDQKL (185 aa). N6-acetyllysine; alternate is present on K59. K59 carries the post-translational modification N6-succinyllysine; alternate. K62 carries the N6-acetyllysine modification. K69 is subject to N6-acetyllysine; alternate. The residue at position 69 (K69) is an N6-succinyllysine; alternate. An N6-acetyllysine modification is found at K75. K85 bears the N6-acetyllysine; alternate mark. K85 carries the N6-succinyllysine; alternate modification. A Phosphothreonine modification is found at T93. 2 positions are modified to N6-acetyllysine: K101 and K139. S140 carries the phosphoserine modification. An N6-acetyllysine; alternate modification is found at K158. N6-succinyllysine; alternate is present on K158. At K164 the chain carries N6-acetyllysine. K187 is subject to N6-succinyllysine. K203 carries the N6-acetyllysine; alternate modification. K203 is subject to N6-succinyllysine; alternate. Residues 205–333 are domain II; it reads TKSDRPELTG…PEMTELLKKK (129 aa). K216 bears the N6-succinyllysine mark. FAD is bound at residue R223. An N6-acetyllysine; alternate mark is found at K226 and K232. An N6-succinyllysine; alternate mark is found at K226 and K232. FAD contacts are provided by residues S248, 263 to 266, 281 to 286, and N300; these read VGQT and SGAIQH. K301 is subject to N6-succinyllysine. FAD is bound at residue 318–319; sequence DL.

This sequence belongs to the ETF alpha-subunit/FixB family. Heterodimer composed of ETFA and ETFB. Identified in a complex that contains ETFA, ETFB and ETFRF1. Interaction with ETFRF1 promotes dissociation of the bound FAD and loss of electron transfer activity. Interacts with TASOR. It depends on FAD as a cofactor.

The protein localises to the mitochondrion matrix. Heterodimeric electron transfer flavoprotein that accepts electrons from several mitochondrial dehydrogenases, including acyl-CoA dehydrogenases, glutaryl-CoA and sarcosine dehydrogenase. It transfers the electrons to the main mitochondrial respiratory chain via ETF-ubiquinone oxidoreductase (ETF dehydrogenase). Required for normal mitochondrial fatty acid oxidation and normal amino acid metabolism. The chain is Electron transfer flavoprotein subunit alpha, mitochondrial (ETFA) from Bos taurus (Bovine).